The following is a 264-amino-acid chain: 3-methyl-2-oxobutanoate hydroxymethyltransferase (264 aa).

The Mg(2+) site is built by D44 and D83. 3-methyl-2-oxobutanoate contacts are provided by residues 44–45, D83, and K111; that span reads DS. Residue E113 coordinates Mg(2+). Residue E180 is the Proton acceptor of the active site.

The protein belongs to the PanB family. In terms of assembly, homodecamer; pentamer of dimers. The cofactor is Mg(2+).

The protein resides in the cytoplasm. The catalysed reaction is 3-methyl-2-oxobutanoate + (6R)-5,10-methylene-5,6,7,8-tetrahydrofolate + H2O = 2-dehydropantoate + (6S)-5,6,7,8-tetrahydrofolate. Its pathway is cofactor biosynthesis; (R)-pantothenate biosynthesis; (R)-pantoate from 3-methyl-2-oxobutanoate: step 1/2. In terms of biological role, catalyzes the reversible reaction in which hydroxymethyl group from 5,10-methylenetetrahydrofolate is transferred onto alpha-ketoisovalerate to form ketopantoate. The sequence is that of 3-methyl-2-oxobutanoate hydroxymethyltransferase from Marinobacter nauticus (strain ATCC 700491 / DSM 11845 / VT8) (Marinobacter aquaeolei).